The sequence spans 157 residues: Protein E6 (157 aa).

2 zinc fingers span residues 39–75 (CNFCGKFLDFLEVCDFDKKQLTLIWKGHFVTACCRSC) and 112–148 (CQTCLSFLDTIEKLDSCGRGLPFHKVRDRWKGICRQC).

It belongs to the papillomaviridae E6 protein family. Forms homodimers. Interacts with ubiquitin-protein ligase UBE3A/E6-AP; this interaction stimulates UBE3A ubiquitin activity. Interacts with host BAK1.

Its subcellular location is the host cytoplasm. The protein resides in the host nucleus. Functionally, plays a major role in the induction and maintenance of cellular transformation. E6 associates with host UBE3A/E6-AP ubiquitin-protein ligase and modulates its activity. Protects host keratinocytes from apoptosis by mediating the degradation of host BAK1. May also inhibit host immune response. The sequence is that of Protein E6 from Homo sapiens (Human).